Here is a 177-residue protein sequence, read N- to C-terminus: Negative modulator of initiation of replication (177 aa).

It belongs to the SeqA family. In terms of assembly, homodimer. Polymerizes to form helical filaments.

It localises to the cytoplasm. Functionally, negative regulator of replication initiation, which contributes to regulation of DNA replication and ensures that replication initiation occurs exactly once per chromosome per cell cycle. Binds to pairs of hemimethylated GATC sequences in the oriC region, thus preventing assembly of replication proteins and re-initiation at newly replicated origins. Repression is relieved when the region becomes fully methylated. The chain is Negative modulator of initiation of replication from Vibrio cholerae serotype O1 (strain ATCC 39315 / El Tor Inaba N16961).